We begin with the raw amino-acid sequence, 194 residues long: dTTP/UTP pyrophosphatase (194 aa).

Residue Asp73 is the Proton acceptor of the active site.

This sequence belongs to the Maf family. YhdE subfamily. The cofactor is a divalent metal cation.

It localises to the cytoplasm. The catalysed reaction is dTTP + H2O = dTMP + diphosphate + H(+). It catalyses the reaction UTP + H2O = UMP + diphosphate + H(+). Functionally, nucleoside triphosphate pyrophosphatase that hydrolyzes dTTP and UTP. May have a dual role in cell division arrest and in preventing the incorporation of modified nucleotides into cellular nucleic acids. The protein is dTTP/UTP pyrophosphatase of Clostridium botulinum (strain Kyoto / Type A2).